Reading from the N-terminus, the 396-residue chain is Ribosomal RNA large subunit methyltransferase I (396 aa).

The PUA domain occupies Thr2–Arg81.

This sequence belongs to the methyltransferase superfamily. RlmI family.

It localises to the cytoplasm. It catalyses the reaction cytidine(1962) in 23S rRNA + S-adenosyl-L-methionine = 5-methylcytidine(1962) in 23S rRNA + S-adenosyl-L-homocysteine + H(+). Specifically methylates the cytosine at position 1962 (m5C1962) of 23S rRNA. This chain is Ribosomal RNA large subunit methyltransferase I, found in Yersinia pestis bv. Antiqua (strain Antiqua).